The sequence spans 1180 residues: MSDVAETLDPLRLPLQGERLIEASAGTGKTFTIAALYLRLLLGLGGSAAFPRPLTVEELLVVTFTEAATAELRGRIRSNIHELRIACLRETTDNPLYERLLEEIDDKAQAAQWLLLAERQMDEAAVFTIHGFCQRMLNLNAFESGMLFEQQLIEDESLLRYQACADFWRRHCYPLPREIAQVVFETWKGPQALLRDINRYLQGEAPVIKAPPPDDETLASRHAQIVARIDTVKQQWRDAVGELDALIESSGIDRRKFNRSNQAKWIDKISAWAEEETNSYQLPESLEKFSQRFLEDRTKAGGETPRHPLFEAIDQLLAEPLSIRDLVITRALAEIRETVAREKRRRGELGFDDMLSRLDSALRSESGEVLAAAIRTRFPVAMIDEFQDTDPQQYRIFRRIWHHQPETALLLIGDPKQAIYAFRGADIFTYMKARSEVHAHYTLDTNWRSAPGMVNSVNKLFSQTDDAFMFREIPFIPVKSAGKNQALRFVFKGETQPAMKMWLMEGESCGVGDYQSTMAQVCAAQIRDWLQAGQRGEALLMNGDDARPVRASDISVLVRSRQEAAQVRDALTLLEIPSVYLSNRDSVFETLEAQEMLWLLQAVMTPERENTLRSALATSMMGLNALDIETLNNDEHAWDVVVEEFDGYRQIWRKRGVMPMLRALMSARNIAENLLATAGGERRLTDILHISELLQEAGTQLESEHALVRWLSQHILEPDSNASSQQMRLESDKHLVQIVTIHKSKGLEYPLVWLPFITNFRVQEQAFYHDRHSFEAVLDLNAAPESVDLAEAERLAEDLRLLYVALTRSVWHCSLGVAPLVRRRGDKKGDTDVHQSALGRLLQKGEPQDAAGLRTCIEALCDDDIAWQTAQTGDNQPWQVNDVSTAELNAKTLQRLPGDNWRVTSYSGLQQRGHGIAQDLMPRLDVDAAGVASVVEEPTLTPHQFPRGASPGTFLHSLFEDLDFTQPVDPNWVREKLELGGFESQWEPVLTEWITAVLQAPLNETGVSLSQLSARNKQVEMEFYLPISEPLIASQLDTLIRQFDPLSAGCPPLEFMQVRGMLKGFIDLVFRHEGRYYLLDYKSNWLGEDSSAYTQQAMAAAMQAHRYDLQYQLYTLALHRYLRHRIADYDYEHHFGGVIYLFLRGVDKEHPQQGIYTTRPNAGLIALMDEMFAGMTLEEA.

In terms of domain architecture, UvrD-like helicase ATP-binding spans 2-450 (SDVAETLDPL…YTLDTNWRSA (449 aa)). Residues 2–853 (SDVAETLDPL…KGEPQDAAGL (852 aa)) are ATPase, DNA-binding and helicase activity, interacts with RecC. 23–30 (ASAGTGKT) lines the ATP pocket. A DNA-binding region spans residues 252–254 (IDR). Tryptophan 447 lines the ATP pocket. Residues 480-746 (SAGKNQALRF…QIVTIHKSKG (267 aa)) enclose the UvrD-like helicase C-terminal domain. 3 DNA-binding regions span residues 511–512 (VG), 560–561 (SR), and arginine 761. The tract at residues 900–1180 (NWRVTSYSGL…MFAGMTLEEA (281 aa)) is nuclease activity, interacts with RecD and RecA. Positions 956, 1067, 1080, and 1081 each coordinate Mg(2+). Residue aspartate 1080 is the For nuclease activity of the active site.

Belongs to the helicase family. UvrD subfamily. As to quaternary structure, heterotrimer of RecB, RecC and RecD. All subunits contribute to DNA-binding. The C-terminus interacts with RecA. Interacts with YgbT (Cas1). (Microbial infection) Lambda virus GamS protein interacts with the enzyme without displacing any of the subunits. Requires Mg(2+) as cofactor.

It catalyses the reaction Exonucleolytic cleavage (in the presence of ATP) in either 5'- to 3'- or 3'- to 5'-direction to yield 5'-phosphooligonucleotides.. It carries out the reaction Couples ATP hydrolysis with the unwinding of duplex DNA by translocating in the 3'-5' direction.. The catalysed reaction is ATP + H2O = ADP + phosphate + H(+). With respect to regulation, after reacting with DNA bearing a Chi site the holoenzyme is disassembled and loses exonuclease activity, DNA unwinding and Chi-directed DNA cleavage; RecB remains complexed with ssDNA, which may prevent holoenzyme reassembly. High levels of Mg(2+) (13 mM MgCl(2+)) or incubation with DNase allows holoenzyme reassembly, suggesting it is DNA bound to RecB that prevents reassembly. Its activity is regulated as follows. (Microbial infection) RecBCD is inhibited by the lambda virus gam protein (both GamL and GamS isoforms); in vitro a short preincubation prior to adding DNA results in maximal inhibition. Its function is as follows. A helicase/nuclease that prepares dsDNA breaks (DSB) for recombinational DNA repair. Binds to DSBs and unwinds DNA via a rapid (&gt;1 kb/second) and highly processive (&gt;30 kb) ATP-dependent bidirectional helicase. Unwinds dsDNA until it encounters a Chi (crossover hotspot instigator, 5'-GCTGGTGG-3') sequence from the 3' direction. Cuts ssDNA a few nucleotides 3' to Chi site, by nicking one strand or switching the strand degraded (depending on the reaction conditions). The properties and activities of the enzyme are changed at Chi. The Chi-altered holoenzyme produces a long 3'-ssDNA overhang which facilitates RecA-binding to the ssDNA for homologous DNA recombination and repair. Holoenzyme degrades any linearized DNA that is unable to undergo homologous recombination. In the holoenzyme this subunit contributes ATPase, 3'-5' helicase, exonuclease activity and loads RecA onto ssDNA. The RecBC complex requires the RecD subunit for nuclease activity, but can translocate along ssDNA in both directions. The RecBCD complex does not unwind G-quadruplex DNA. Probably interacts with a component of retron Ec48 which moniters RecBCD stability; when RecB is missing or impaired the retron is activated and becomes toxic. The chain is RecBCD enzyme subunit RecB from Escherichia coli (strain K12).